The primary structure comprises 298 residues: Protein BZR1 homolog 1 (298 aa).

4 disordered regions span residues 1–25 (MTSG…RRER), 71–129 (GTTY…SPSR), 153–175 (VSSS…PKIR), and 190–217 (AVSA…ESDV). Residues 10 to 91 (RTPTWKEREN…PSSAGGASVG (82 aa)) are required for DNA-binding. Residues 96 to 128 (SSTQLLSAPSSSFPSPVPSYHASPASSSFPSPS) are compositionally biased toward low complexity. Ser-156 is subject to Phosphoserine. The tract at residues 204–224 (EHPDTIPECDESDVSTVDSGR) is PEST-like.

It belongs to the BZR/LAT61 family. As to quaternary structure, interacts with GF14C. Interacts with PUB24. Interacts with SMOS1. Post-translationally, phosphorylated on serine and threonine residues by GSK2. Dephosphorylated during response to brassinosteroid. In terms of processing, ubiquitinated by PUB24. Ubiquitination leads to its subsequent degradation by the 26S proteasome, thus reducing sensitivity to brassinosteroid signaling.

The protein localises to the nucleus. Its subcellular location is the cytoplasm. In terms of biological role, positive brassinosteroid-signaling protein. Mediates downstream brassinosteroid-regulated growth response and feedback inhibition of brassinosteroid (BR) biosynthetic genes. May act as transcriptional repressor by binding the brassinosteroid-response element (BREE) (5'-CGTG(T/C)G-3') in the promoter of DLT (AC Q9LWU9), another positive regulator of BR signaling. Acts as a transcriptional repressor of LIC, a negative regulator of BR signaling, by binding to the BRRE element of its promoter. BZR1 and LIC play opposite roles in BR signaling and regulation of leaf bending. This Oryza sativa subsp. japonica (Rice) protein is Protein BZR1 homolog 1.